The primary structure comprises 315 residues: DNA-directed RNA polymerase subunit alpha (315 aa).

Positions 1-227 (MTQFQIECVE…NLFNPFKKIN (227 aa)) are alpha N-terminal domain (alpha-NTD). Residues 239–315 (EDKISQIPIE…PKRKTNKKEN (77 aa)) are alpha C-terminal domain (alpha-CTD).

This sequence belongs to the RNA polymerase alpha chain family. As to quaternary structure, in plastids the minimal PEP RNA polymerase catalytic core is composed of four subunits: alpha, beta, beta', and beta''. When a (nuclear-encoded) sigma factor is associated with the core the holoenzyme is formed, which can initiate transcription.

The protein resides in the plastid. The protein localises to the cyanelle. The enzyme catalyses RNA(n) + a ribonucleoside 5'-triphosphate = RNA(n+1) + diphosphate. Its function is as follows. DNA-dependent RNA polymerase catalyzes the transcription of DNA into RNA using the four ribonucleoside triphosphates as substrates. This Cyanophora paradoxa protein is DNA-directed RNA polymerase subunit alpha.